The chain runs to 146 residues: Ribosomal RNA large subunit methyltransferase H (146 aa).

S-adenosyl-L-methionine is bound by residues L62, G94, and 113 to 118 (LGELTL).

The protein belongs to the RNA methyltransferase RlmH family. Homodimer.

The protein resides in the cytoplasm. The enzyme catalyses pseudouridine(1915) in 23S rRNA + S-adenosyl-L-methionine = N(3)-methylpseudouridine(1915) in 23S rRNA + S-adenosyl-L-homocysteine + H(+). In terms of biological role, specifically methylates the pseudouridine at position 1915 (m3Psi1915) in 23S rRNA. The protein is Ribosomal RNA large subunit methyltransferase H of Deinococcus radiodurans (strain ATCC 13939 / DSM 20539 / JCM 16871 / CCUG 27074 / LMG 4051 / NBRC 15346 / NCIMB 9279 / VKM B-1422 / R1).